Here is a 143-residue protein sequence, read N- to C-terminus: Ponticulin (143 aa).

A signal peptide spans 1 to 22; that stretch reads MLVLRNLLALVTLALLFTLSSA. N-linked (GlcNAc...) asparagine glycosylation occurs at Asn111. Ser118 carries the GPI-like-anchor amidated serine lipid modification. Positions 119-143 are cleaved as a propeptide — removed in mature form; that stretch reads SSGSTVMIGLASSLLFAFATLLALF.

The protein belongs to the ponticulin family. Monomer. Post-translationally, disulfide bond(s) stabilize the native, actin-binding conformation of ponticulin. In terms of processing, the GPI-like-anchor contains a phosphoceramide group, rather than a phosphatidyl group.

It localises to the cell membrane. In terms of biological role, binds F-actin and nucleates actin assembly. Major high affinity link between the plasma membrane and the cortical actin network. This Dictyostelium discoideum (Social amoeba) protein is Ponticulin (ponA).